Reading from the N-terminus, the 238-residue chain is Ribonuclease PH (238 aa).

Phosphate-binding positions include arginine 86 and 124-126 (GTR).

This sequence belongs to the RNase PH family. As to quaternary structure, homohexameric ring arranged as a trimer of dimers.

The enzyme catalyses tRNA(n+1) + phosphate = tRNA(n) + a ribonucleoside 5'-diphosphate. Phosphorolytic 3'-5' exoribonuclease that plays an important role in tRNA 3'-end maturation. Removes nucleotide residues following the 3'-CCA terminus of tRNAs; can also add nucleotides to the ends of RNA molecules by using nucleoside diphosphates as substrates, but this may not be physiologically important. Probably plays a role in initiation of 16S rRNA degradation (leading to ribosome degradation) during starvation. The protein is Ribonuclease PH of Rhizorhabdus wittichii (strain DSM 6014 / CCUG 31198 / JCM 15750 / NBRC 105917 / EY 4224 / RW1) (Sphingomonas wittichii).